Reading from the N-terminus, the 37-residue chain is Large ribosomal subunit protein bL36 (37 aa).

It belongs to the bacterial ribosomal protein bL36 family.

The sequence is that of Large ribosomal subunit protein bL36 from Vibrio atlanticus (strain LGP32) (Vibrio splendidus (strain Mel32)).